The following is a 152-amino-acid chain: UPF0756 membrane protein Daud_1310 (152 aa).

4 helical membrane-spanning segments follow: residues 14-34, 51-71, 76-96, and 112-132; these read LVGVLAKSHLIAAAACILLFI, LELGLLILLLTIMVPLANGKI, IIYNLTSIPGLLAILGGALAT, and IIFGLIIGSIFGILFLGGMPV.

Belongs to the UPF0756 family.

The protein localises to the cell membrane. This chain is UPF0756 membrane protein Daud_1310, found in Desulforudis audaxviator (strain MP104C).